We begin with the raw amino-acid sequence, 404 residues long: Translation initiation factor eIF2B subunit gamma (404 aa).

It belongs to the eIF-2B gamma/epsilon subunits family. In terms of assembly, component of the translation initiation factor 2B (eIF2B) complex which is a heterodecamer of two sets of five different subunits: alpha, beta, gamma, delta and epsilon. Subunits alpha, beta and delta comprise a regulatory subcomplex and subunits epsilon and gamma comprise a catalytic subcomplex. Within the complex, the hexameric regulatory complex resides at the center, with the two heterodimeric catalytic subcomplexes bound on opposite sides.

It is found in the cytoplasm. It localises to the cytosol. Functionally, acts as a component of the translation initiation factor 2B (eIF2B) complex, which catalyzes the exchange of GDP for GTP on the eukaryotic initiation factor 2 (eIF2) complex gamma subunit. Its guanine nucleotide exchange factor activity is repressed when bound to eIF2 complex phosphorylated on the alpha subunit, thereby limiting the amount of methionyl-initiator methionine tRNA available to the ribosome and consequently global translation is repressed. This chain is Translation initiation factor eIF2B subunit gamma, found in Caenorhabditis elegans.